The chain runs to 768 residues: Lon protease (768 aa).

In terms of domain architecture, Lon N-terminal spans Ala4 to Met198. Gly349–Thr356 contacts ATP. Residues Thr586–Lys768 enclose the Lon proteolytic domain. Residues Ser674 and Lys717 contribute to the active site.

Belongs to the peptidase S16 family. In terms of assembly, homohexamer. Organized in a ring with a central cavity.

It localises to the cytoplasm. The enzyme catalyses Hydrolysis of proteins in presence of ATP.. ATP-dependent serine protease that mediates the selective degradation of mutant and abnormal proteins as well as certain short-lived regulatory proteins. Required for cellular homeostasis and for survival from DNA damage and developmental changes induced by stress. Degrades polypeptides processively to yield small peptide fragments that are 5 to 10 amino acids long. Binds to DNA in a double-stranded, site-specific manner. The protein is Lon protease of Fusobacterium nucleatum subsp. nucleatum (strain ATCC 25586 / DSM 15643 / BCRC 10681 / CIP 101130 / JCM 8532 / KCTC 2640 / LMG 13131 / VPI 4355).